Reading from the N-terminus, the 551-residue chain is Electron transfer flavoprotein-ubiquinone oxidoreductase (551 aa).

Position 10–24 (10–24) interacts with FAD; that stretch reads VVIVGAGPAGLSAAC. Residues cysteine 496, cysteine 520, cysteine 523, and cysteine 526 each coordinate [4Fe-4S] cluster. The 4Fe-4S ferredoxin-type domain maps to 511–540; it reads KRFQINAQNCVHCKTCDIKDPAQNITWVAP.

This sequence belongs to the ETF-QO/FixC family. [4Fe-4S] cluster serves as cofactor. It depends on FAD as a cofactor.

It catalyses the reaction a ubiquinone + reduced [electron-transfer flavoprotein] = a ubiquinol + oxidized [electron-transfer flavoprotein] + H(+). In terms of biological role, accepts electrons from ETF and reduces ubiquinone. This is Electron transfer flavoprotein-ubiquinone oxidoreductase from Pseudomonas aeruginosa (strain ATCC 15692 / DSM 22644 / CIP 104116 / JCM 14847 / LMG 12228 / 1C / PRS 101 / PAO1).